A 577-amino-acid polypeptide reads, in one-letter code: Protein GPR108 (577 aa).

A signal peptide spans 1 to 34; that stretch reads MAVSERRGLSGESPAQCRWEYLSLLVLMLSGCSG. 2 N-linked (GlcNAc...) asparagine glycosylation sites follow: Asn59 and Asn111. The interval 144-224 is disordered; that stretch reads LLPEAPSQSG…TRGPSGKEKD (81 aa). N-linked (GlcNAc...) asparagine glycans are attached at residues Asn233 and Asn237. 7 helical membrane-spanning segments follow: residues 296–316, 325–345, 369–389, 400–420, 434–454, 482–502, and 506–526; these read LYLI…SVLC, IHWL…FHSI, LLKG…WAFV, IFGI…VIES, ILFL…VWSI, VMVI…RVAV, and WQWL…VLTG.

Belongs to the LU7TM family.

The protein localises to the golgi apparatus. The protein resides in the cis-Golgi network membrane. It is found in the trans-Golgi network membrane. Its subcellular location is the golgi apparatus membrane. Functionally, may play a role in intracellular immune modulation by activating NF-kappaB response and attenuating Toll-like-receptor response. In Rattus norvegicus (Rat), this protein is Protein GPR108 (Gpr108).